A 1152-amino-acid chain; its full sequence is P3N-PIPO polyprotein (1152 aa).

Residues 292–437 (VMNQQTLTAL…HTLTHRMVQY (146 aa)) form the Peptidase S30 domain. Residues His-345, Asp-354, and Ser-388 each act as for P1 proteinase activity in the active site. The Involved in interaction with stylet and aphid transmission motif lies at 489–492 (KITC). Positions 747–749 (PTK) match the Involved in virions binding and aphid transmission motif. A Peptidase C6 domain is found at 773 to 895 (MFVAKDGYCY…ESEMQHYRVG (123 aa)). Residues Cys-781 and His-854 each act as for helper component proteinase activity in the active site.

It belongs to the potyviridae P3N-PIPO polyprotein family. Interacts (via PIPO domain) with host PCaP1 protein; this interaction may help to anchor the movement complex to the plasma membrane from which the complex could move to the plasmodesmata. Potyviral RNA is expressed as two polyproteins which undergo post-translational proteolytic processing. Genome polyprotein is processed by NIa-pro, P1 and HC-pro proteinases resulting in the production of at least ten individual proteins. P3N-PIPO is cleaved by P1 and HC-pro proteinases resulting in the production of three individual proteins. The P1 proteinase and the HC-pro cleave only their respective C-termini autocatalytically.

The protein resides in the host cell junction. Its subcellular location is the host plasmodesma. It catalyses the reaction Hydrolyzes a Gly-|-Gly bond at its own C-terminus, commonly in the sequence -Tyr-Xaa-Val-Gly-|-Gly, in the processing of the potyviral polyprotein.. Required for aphid transmission and also has proteolytic activity. Only cleaves a Gly-Gly dipeptide at its own C-terminus. Interacts with virions and aphid stylets. Acts as a suppressor of RNA-mediated gene silencing, also known as post-transcriptional gene silencing (PTGS), a mechanism of plant viral defense that limits the accumulation of viral RNAs. May have RNA-binding activity. In terms of biological role, allows efficient cell to cell propagation, by bypassing the host cell wall barrier. Transports viral genome to neighboring plant cells directly through plasmosdesmata, without any budding. In Carthamus tinctorius (Safflower), this protein is P3N-PIPO polyprotein.